Consider the following 419-residue polypeptide: MVPALRYLVGACGRARGGFAGDFPGASGLASGRPRPLCGGSRSASTSSFDIVIVGGGIVGLASARALILRHPSLSIGVLEKEKDLAVHQTGHNSGVIHSGIYYKPESLKAKLCVQGAALLYEYCQQKGISYKQCGKLIVAVEQEEIPRLQALYERGLQNGVQGLRLIQQDDIKKKEPYCRGLMAIDCPHTGIVDYRQVALSFAQDFQDAGGSVLTNFEVKDIEMAKESLSRSIDGMQYPIVIKNIKGEEIRCQYVVTCAGLYSDRISELSGCSPDPRIVSFRGDYLLLKPEKCYLVKGNIYPVPDSRFPFLGVHFTLRMDGSIWLGPNAVLAFKREGYRPFDFSATDVMDIIINRGPAGVRAQALDRDGNLVDDFVFDAGVGDIGNRILHVRNAPSPAATSSIAISGMIADEVQQRFEL.

The transit peptide at 1 to 51 (MVPALRYLVGACGRARGGFAGDFPGASGLASGRPRPLCGGSRSASTSSFDI) directs the protein to the mitochondrion. N6-acetyllysine is present on residues lysine 104 and lysine 173.

Belongs to the L2HGDH family. FAD serves as cofactor.

It localises to the mitochondrion. The enzyme catalyses (S)-2-hydroxyglutarate + A = 2-oxoglutarate + AH2. This is L-2-hydroxyglutarate dehydrogenase, mitochondrial (L2HGDH) from Pongo abelii (Sumatran orangutan).